Here is a 114-residue protein sequence, read N- to C-terminus: ATP synthase subunit beta, mitochondrial (114 aa).

44 to 51 is an ATP binding site; sequence GGAGVGKT.

The protein belongs to the ATPase alpha/beta chains family. F-type ATPases have 2 components, CF(1) - the catalytic core - and CF(0) - the membrane proton channel. CF(1) has five subunits: alpha(3), beta(3), gamma(1), delta(1), epsilon(1). CF(0) has three main subunits: a, b and c.

Its subcellular location is the mitochondrion. The protein resides in the mitochondrion inner membrane. It catalyses the reaction ATP + H2O + 4 H(+)(in) = ADP + phosphate + 5 H(+)(out). Mitochondrial membrane ATP synthase (F(1)F(0) ATP synthase or Complex V) produces ATP from ADP in the presence of a proton gradient across the membrane which is generated by electron transport complexes of the respiratory chain. F-type ATPases consist of two structural domains, F(1) - containing the extramembraneous catalytic core, and F(0) - containing the membrane proton channel, linked together by a central stalk and a peripheral stalk. During catalysis, ATP synthesis in the catalytic domain of F(1) is coupled via a rotary mechanism of the central stalk subunits to proton translocation. Subunits alpha and beta form the catalytic core in F(1). Rotation of the central stalk against the surrounding alpha(3)beta(3) subunits leads to hydrolysis of ATP in three separate catalytic sites on the beta subunits. In Penicillium glabrum (Penicillium frequentans), this protein is ATP synthase subunit beta, mitochondrial (atp2).